The following is a 315-amino-acid chain: DNA-directed RNA polymerase subunit alpha (315 aa).

The tract at residues 1 to 228 (MLEIEKPKIE…EHFKLFMTLT (228 aa)) is alpha N-terminal domain (alpha-NTD). Positions 245 to 315 (KEKVLEMTIE…LGLSLKLNDE (71 aa)) are alpha C-terminal domain (alpha-CTD).

It belongs to the RNA polymerase alpha chain family. In terms of assembly, homodimer. The RNAP catalytic core consists of 2 alpha, 1 beta, 1 beta' and 1 omega subunit. When a sigma factor is associated with the core the holoenzyme is formed, which can initiate transcription.

The enzyme catalyses RNA(n) + a ribonucleoside 5'-triphosphate = RNA(n+1) + diphosphate. In terms of biological role, DNA-dependent RNA polymerase catalyzes the transcription of DNA into RNA using the four ribonucleoside triphosphates as substrates. This chain is DNA-directed RNA polymerase subunit alpha, found in Clostridium acetobutylicum (strain ATCC 824 / DSM 792 / JCM 1419 / IAM 19013 / LMG 5710 / NBRC 13948 / NRRL B-527 / VKM B-1787 / 2291 / W).